We begin with the raw amino-acid sequence, 185 residues long: Orotate phosphoribosyltransferase (185 aa).

Residues R99, K100, K103, and 125-133 (EDVTTTGGS) each bind 5-phospho-alpha-D-ribose 1-diphosphate. Positions 129 and 157 each coordinate orotate.

This sequence belongs to the purine/pyrimidine phosphoribosyltransferase family. PyrE subfamily. Homodimer. Mg(2+) is required as a cofactor.

It catalyses the reaction orotidine 5'-phosphate + diphosphate = orotate + 5-phospho-alpha-D-ribose 1-diphosphate. Its pathway is pyrimidine metabolism; UMP biosynthesis via de novo pathway; UMP from orotate: step 1/2. In terms of biological role, catalyzes the transfer of a ribosyl phosphate group from 5-phosphoribose 1-diphosphate to orotate, leading to the formation of orotidine monophosphate (OMP). This is Orotate phosphoribosyltransferase from Methanococcus maripaludis (strain DSM 14266 / JCM 13030 / NBRC 101832 / S2 / LL).